The primary structure comprises 115 residues: Large ribosomal subunit protein eL30 (115 aa).

This sequence belongs to the eukaryotic ribosomal protein eL30 family. As to quaternary structure, component of the large ribosomal subunit.

It is found in the cytoplasm. In terms of biological role, component of the large ribosomal subunit. The ribosome is a large ribonucleoprotein complex responsible for the synthesis of proteins in the cell. This is Large ribosomal subunit protein eL30 (RPL30) from Gallus gallus (Chicken).